The sequence spans 362 residues: Biotin synthase (362 aa).

Residues 46-273 enclose the Radical SAM core domain; that stretch reads NEVQVSTLLS…ASHVRLSAGR (228 aa). [4Fe-4S] cluster-binding residues include Cys61, Cys65, and Cys68. [2Fe-2S] cluster-binding residues include Cys105, Cys136, Cys196, and Arg268.

It belongs to the radical SAM superfamily. Biotin synthase family. In terms of assembly, homodimer. Requires [4Fe-4S] cluster as cofactor. It depends on [2Fe-2S] cluster as a cofactor.

It carries out the reaction (4R,5S)-dethiobiotin + (sulfur carrier)-SH + 2 reduced [2Fe-2S]-[ferredoxin] + 2 S-adenosyl-L-methionine = (sulfur carrier)-H + biotin + 2 5'-deoxyadenosine + 2 L-methionine + 2 oxidized [2Fe-2S]-[ferredoxin]. It participates in cofactor biosynthesis; biotin biosynthesis; biotin from 7,8-diaminononanoate: step 2/2. Catalyzes the conversion of dethiobiotin (DTB) to biotin by the insertion of a sulfur atom into dethiobiotin via a radical-based mechanism. The protein is Biotin synthase of Aeromonas salmonicida (strain A449).